The primary structure comprises 786 residues: Endonuclease MutS2 (786 aa).

An ATP-binding site is contributed by 335 to 342 (GPNTGGKT). The disordered stretch occupies residues 529–549 (SQKNAERERKEAEEHRKQSEK). Residues 711-786 (LDLRGERYED…GLGVTVVELK (76 aa)) form the Smr domain.

Belongs to the DNA mismatch repair MutS family. MutS2 subfamily. As to quaternary structure, homodimer. Binds to stalled ribosomes, contacting rRNA.

In terms of biological role, endonuclease that is involved in the suppression of homologous recombination and thus may have a key role in the control of bacterial genetic diversity. Its function is as follows. Acts as a ribosome collision sensor, splitting the ribosome into its 2 subunits. Detects stalled/collided 70S ribosomes which it binds and splits by an ATP-hydrolysis driven conformational change. Acts upstream of the ribosome quality control system (RQC), a ribosome-associated complex that mediates the extraction of incompletely synthesized nascent chains from stalled ribosomes and their subsequent degradation. Probably generates substrates for RQC. In Bacillus mycoides (strain KBAB4) (Bacillus weihenstephanensis), this protein is Endonuclease MutS2.